The following is an 861-amino-acid chain: Protein HIR1 (861 aa).

7 WD repeats span residues E14–S54, R74–M113, A132–R171, V174–F213, P227–S270, S295–V337, and I341–P382. Residues K450–P471 are disordered. The span at T455 to T466 shows a compositional bias: low complexity.

This sequence belongs to the WD repeat HIR1 family.

It localises to the nucleus. Its function is as follows. Required for replication-independent chromatin assembly and for the periodic repression of histone gene transcription during the cell cycle. This Kluyveromyces lactis (strain ATCC 8585 / CBS 2359 / DSM 70799 / NBRC 1267 / NRRL Y-1140 / WM37) (Yeast) protein is Protein HIR1 (HIR1).